The chain runs to 190 residues: Imidazoleglycerol-phosphate dehydratase (190 aa).

Belongs to the imidazoleglycerol-phosphate dehydratase family.

The protein localises to the cytoplasm. The catalysed reaction is D-erythro-1-(imidazol-4-yl)glycerol 3-phosphate = 3-(imidazol-4-yl)-2-oxopropyl phosphate + H2O. The protein operates within amino-acid biosynthesis; L-histidine biosynthesis; L-histidine from 5-phospho-alpha-D-ribose 1-diphosphate: step 6/9. This is Imidazoleglycerol-phosphate dehydratase from Aliarcobacter butzleri (strain RM4018) (Arcobacter butzleri).